The primary structure comprises 592 residues: Catabolite repression protein creC (592 aa).

Positions N119–I140 are disordered. WD repeat units follow at residues I248–I288, L327–R368, S369–R408, and G411–P455. Disordered regions lie at residues H459 to E513 and W556 to L592. Polar residues-rich tracts occupy residues S484–D499 and S564–L576. The WD 5 repeat unit spans residues V529–N566.

Belongs to the WD repeat creC family. Interacts with creB.

Component of the regulatory network controlling carbon source utilization through ubiquitination and deubiquitination involving creA, creB, creC, creD and acrB. Required to prevent the proteolysis of the CreB deubiquitinating enzyme in the absence of carbon catabolite repression. CreB deubiquitinating enzyme stabilized in a complex with the CreC leads to the expression of genes such as those in the proline and quinate pathways. This is Catabolite repression protein creC (creC) from Emericella nidulans (strain FGSC A4 / ATCC 38163 / CBS 112.46 / NRRL 194 / M139) (Aspergillus nidulans).